Here is a 1499-residue protein sequence, read N- to C-terminus: Pleiotropic ABC efflux transporter of multiple drugs CDR1 (1499 aa).

Basic and acidic residues predominate over residues 1–11; it reads MSLASDKKDAD. Residues 1-29 form a disordered region; the sequence is MSLASDKKDADVASTTTTAQDDDNLSTYH. 3 N-linked (GlcNAc...) asparagine glycosylation sites follow: N24, N96, and N99. The region spanning 146 to 399 is the ABC transporter 1 domain; that stretch reads VYNTVVPSTA…FQKMGYVSPE (254 aa). The residue at position 307 (S307) is a Phosphoserine. An N-linked (GlcNAc...) asparagine glycan is attached at N323. Residue S484 is modified to Phosphoserine. Residues 510-530 form a helical membrane-spanning segment; the sequence is GVTLFMVIGNSSMAFILGSMF. The N-linked (GlcNAc...) asparagine glycan is linked to N537. Helical transmembrane passes span 548–568, 597–617, 622–642, 654–674, and 763–783; these read AMFFAVLFNAFSSLLEIFSLF, VPAKLITAVCFNIIYYFLVNF, GVFFFYFLINIVAVFAMSHLF, AAMVPASMLLLGLSMYSGFAI, and GFGIGLAYVIFFLVLYLILCE. A glycan (N-linked (GlcNAc...) asparagine) is linked at N813. Residues 857–1099 form the ABC transporter 2 domain; that stretch reads FHWRNLCYDV…TMIDYFESHG (243 aa). Residue 893 to 900 coordinates ATP; sequence GASGAGKT. N1159 is a glycosylation site (N-linked (GlcNAc...) asparagine). 3 consecutive transmembrane segments (helical) span residues 1193-1213, 1228-1248, and 1278-1298; these read YLWSKFFLTIFNNIFIGFTFF, AVFMFTVIFNPLLQQYLPSFV, and IPWNILAGTVAFVIYYYAIGF. N-linked (GlcNAc...) asparagine glycosylation is present at N1301. Transmembrane regions (helical) follow at residues 1314–1334 and 1342–1362; these read LFWLFSCAFYVYIGSLALFCI and AAANMASLMFTLSLSFCGVLV. N1412 carries an N-linked (GlcNAc...) asparagine glycan. Residues 1466–1486 form a helical membrane-spanning segment; the sequence is WGIFICYIAFNYIAGIFLYWL.

The protein belongs to the ABC transporter superfamily. Phosphorylated at Ser-307 and Ser-484. Ser-307 and Ser-484 are dephosphorylated on glucose depletion and independently rephosphorylated during glucose exposure or under stress.

The protein localises to the cell membrane. Its activity is regulated as follows. Inhibited by clorgyline. Inhibited by RC21v3, a 4-methoxy-2,3,6-trimethylbenzenesulphonyl derivative of the D-octapeptide D-FFKWQRRR, via the interaction with the ectodomain. FK506, enniatin, milbemycin alpha-11, and milbemycin beta-9 also inhibit CDR1 activity. Inhibited by milbemycin A3/A4 oxim derivatives. In terms of biological role, pleiotropic ABC efflux transporter that transports and confers resistance to structurally and functionally unrelated compounds including rhodamine 6G, Nile red, caspofungin, cycloheximide, or azoles such as fluconazole, itraconazole, ketoconazole, posaconazole, voriconazole, and isavuconazole. Chlorbromuron, itraconazole, yohimbine, ketoconazole, miconazole, clotrimazole, DE-11, tamoxifen, quinidine, verapamil can compete for rhodamine 6G's binding site(s) while compounds such as propanil, chloramphenicol, benomyl, voriconazole, tritylimidazole, ketoconazole, miconazole, tamoxifen, gefitinib shared binding site(s) with fluconazole. Nile red mediated efflux appears to be relatively more specific since only five compounds such as ZW3-12, rhodamine 123, miconazole, clotrimazole, and itraconazole can inhibit its accumulation. Does not use as substrates 4-nitroquinoline 1-oxide (4-NQO) and disulfiram. Does not play a role in the azole resistance in mature biofilms. In Candida glabrata (strain ATCC 2001 / BCRC 20586 / JCM 3761 / NBRC 0622 / NRRL Y-65 / CBS 138) (Yeast), this protein is Pleiotropic ABC efflux transporter of multiple drugs CDR1.